The following is a 149-amino-acid chain: Large ribosomal subunit protein uL13 (149 aa).

It belongs to the universal ribosomal protein uL13 family. Part of the 50S ribosomal subunit.

Functionally, this protein is one of the early assembly proteins of the 50S ribosomal subunit, although it is not seen to bind rRNA by itself. It is important during the early stages of 50S assembly. The polypeptide is Large ribosomal subunit protein uL13 (Borrelia duttonii (strain Ly)).